We begin with the raw amino-acid sequence, 666 residues long: Adenylylsulfate reductase subunit alpha (666 aa).

Residues 32–35, 60–61, 67–69, asparagine 78, isoleucine 193, serine 259, serine 417, 461–462, and serine 472 each bind FAD; these read GGMG, DK, SGA, and AD.

This sequence belongs to the FAD-dependent oxidoreductase 2 family. As to quaternary structure, heterodimer composed of AprA and AprB. The heterodimers can dimerize to form heterotetramers. FAD is required as a cofactor.

The protein resides in the cytoplasm. The enzyme catalyses sulfite + A + AMP + 2 H(+) = adenosine 5'-phosphosulfate + AH2. Functionally, catalytic subunit of the adenylylsulfate reductase which catalyzes reversibly the reduction of adenosine 5'-phosphosulfate (APS) to sulfite and AMP during dissimilatory sulfate reduction. The polypeptide is Adenylylsulfate reductase subunit alpha (Megalodesulfovibrio gigas (strain ATCC 19364 / DSM 1382 / NCIMB 9332 / VKM B-1759) (Desulfovibrio gigas)).